Consider the following 307-residue polypeptide: Probable porphobilinogen deaminase (307 aa).

Position 240 is an S-(dipyrrolylmethanemethyl)cysteine (C240).

It belongs to the HMBS family. It depends on dipyrromethane as a cofactor.

It carries out the reaction 4 porphobilinogen + H2O = hydroxymethylbilane + 4 NH4(+). Its pathway is porphyrin-containing compound metabolism; protoporphyrin-IX biosynthesis; coproporphyrinogen-III from 5-aminolevulinate: step 2/4. Functionally, tetrapolymerization of the monopyrrole PBG into the hydroxymethylbilane pre-uroporphyrinogen in several discrete steps. In Aeropyrum pernix (strain ATCC 700893 / DSM 11879 / JCM 9820 / NBRC 100138 / K1), this protein is Probable porphobilinogen deaminase (hemC).